The following is an 87-amino-acid chain: Small ribosomal subunit protein bS20 (87 aa).

Basic residues predominate over residues methionine 1–alanine 15. The disordered stretch occupies residues methionine 1 to threonine 27. Residues lysine 16–threonine 27 show a composition bias toward basic and acidic residues.

It belongs to the bacterial ribosomal protein bS20 family.

Its function is as follows. Binds directly to 16S ribosomal RNA. This Citrifermentans bemidjiense (strain ATCC BAA-1014 / DSM 16622 / JCM 12645 / Bem) (Geobacter bemidjiensis) protein is Small ribosomal subunit protein bS20.